We begin with the raw amino-acid sequence, 153 residues long: Nucleoside diphosphate kinase (153 aa).

ATP contacts are provided by Lys-11, Phe-59, Arg-87, Thr-93, Arg-104, and Asn-114. Catalysis depends on His-117, which acts as the Pros-phosphohistidine intermediate.

Belongs to the NDK family. Homotrimer. Mg(2+) serves as cofactor.

It carries out the reaction a 2'-deoxyribonucleoside 5'-diphosphate + ATP = a 2'-deoxyribonucleoside 5'-triphosphate + ADP. It catalyses the reaction a ribonucleoside 5'-diphosphate + ATP = a ribonucleoside 5'-triphosphate + ADP. Its function is as follows. Major role in the synthesis of nucleoside triphosphates other than ATP. The ATP gamma phosphate is transferred to the NDP beta phosphate via a ping-pong mechanism, using a phosphorylated active-site intermediate. In Aspergillus fumigatus (strain ATCC MYA-4609 / CBS 101355 / FGSC A1100 / Af293) (Neosartorya fumigata), this protein is Nucleoside diphosphate kinase (ndk1).